We begin with the raw amino-acid sequence, 668 residues long: DNA ligase (668 aa).

NAD(+) is bound by residues 32-36 (DAEYD), 81-82 (SL), and Glu111. Lys113 acts as the N6-AMP-lysine intermediate in catalysis. NAD(+)-binding residues include Arg134, Glu171, Lys290, and Lys314. Zn(2+)-binding residues include Cys408, Cys411, Cys426, and Cys432. The 78-residue stretch at 591-668 (EEDLSLKGQT…DEEALIAILS (78 aa)) folds into the BRCT domain.

The protein belongs to the NAD-dependent DNA ligase family. LigA subfamily. Mg(2+) is required as a cofactor. Mn(2+) serves as cofactor.

It catalyses the reaction NAD(+) + (deoxyribonucleotide)n-3'-hydroxyl + 5'-phospho-(deoxyribonucleotide)m = (deoxyribonucleotide)n+m + AMP + beta-nicotinamide D-nucleotide.. DNA ligase that catalyzes the formation of phosphodiester linkages between 5'-phosphoryl and 3'-hydroxyl groups in double-stranded DNA using NAD as a coenzyme and as the energy source for the reaction. It is essential for DNA replication and repair of damaged DNA. This is DNA ligase from Shewanella pealeana (strain ATCC 700345 / ANG-SQ1).